Consider the following 546-residue polypeptide: Chaperonin GroEL (546 aa).

ATP contacts are provided by residues 30–33, Lys-51, 87–91, Gly-415, and Asp-496; these read TLGP and DGTTT. Positions 526-546 are disordered; sequence PEPKSAPAGGMGGMGGMDGMM. Residues 534-546 are compositionally biased toward gly residues; it reads GGMGGMGGMDGMM.

It belongs to the chaperonin (HSP60) family. In terms of assembly, forms a cylinder of 14 subunits composed of two heptameric rings stacked back-to-back. Interacts with the co-chaperonin GroES.

The protein localises to the cytoplasm. It catalyses the reaction ATP + H2O + a folded polypeptide = ADP + phosphate + an unfolded polypeptide.. Functionally, together with its co-chaperonin GroES, plays an essential role in assisting protein folding. The GroEL-GroES system forms a nano-cage that allows encapsulation of the non-native substrate proteins and provides a physical environment optimized to promote and accelerate protein folding. The chain is Chaperonin GroEL from Rhodopseudomonas palustris.